A 234-amino-acid chain; its full sequence is Triosephosphate isomerase (234 aa).

8-10 (NFK) contacts substrate. His-90 functions as the Electrophile in the catalytic mechanism. The Proton acceptor role is filled by Glu-159. Residues Gly-165 and Ser-197 each contribute to the substrate site.

Belongs to the triosephosphate isomerase family. Homodimer.

Its subcellular location is the cytoplasm. It catalyses the reaction D-glyceraldehyde 3-phosphate = dihydroxyacetone phosphate. It participates in carbohydrate biosynthesis; gluconeogenesis. Its pathway is carbohydrate degradation; glycolysis; D-glyceraldehyde 3-phosphate from glycerone phosphate: step 1/1. Its function is as follows. Involved in the gluconeogenesis. Catalyzes stereospecifically the conversion of dihydroxyacetone phosphate (DHAP) to D-glyceraldehyde-3-phosphate (G3P). The polypeptide is Triosephosphate isomerase (Helicobacter pylori (strain P12)).